A 487-amino-acid chain; its full sequence is Protein nucleotidyltransferase YdiU (487 aa).

The ATP site is built by Gly-90, Gly-92, Arg-93, Lys-113, Asp-125, Gly-126, Arg-176, and Arg-183. The active-site Proton acceptor is the Asp-252. Asn-253 and Asp-262 together coordinate Mg(2+). Residue Asp-262 participates in ATP binding.

The protein belongs to the SELO family. Mg(2+) serves as cofactor. Mn(2+) is required as a cofactor.

The enzyme catalyses L-seryl-[protein] + ATP = 3-O-(5'-adenylyl)-L-seryl-[protein] + diphosphate. It carries out the reaction L-threonyl-[protein] + ATP = 3-O-(5'-adenylyl)-L-threonyl-[protein] + diphosphate. The catalysed reaction is L-tyrosyl-[protein] + ATP = O-(5'-adenylyl)-L-tyrosyl-[protein] + diphosphate. It catalyses the reaction L-histidyl-[protein] + UTP = N(tele)-(5'-uridylyl)-L-histidyl-[protein] + diphosphate. The enzyme catalyses L-seryl-[protein] + UTP = O-(5'-uridylyl)-L-seryl-[protein] + diphosphate. It carries out the reaction L-tyrosyl-[protein] + UTP = O-(5'-uridylyl)-L-tyrosyl-[protein] + diphosphate. Its function is as follows. Nucleotidyltransferase involved in the post-translational modification of proteins. It can catalyze the addition of adenosine monophosphate (AMP) or uridine monophosphate (UMP) to a protein, resulting in modifications known as AMPylation and UMPylation. This is Protein nucleotidyltransferase YdiU from Ectopseudomonas mendocina (strain ymp) (Pseudomonas mendocina).